Reading from the N-terminus, the 227-residue chain is Cytochrome c oxidase subunit 2 (227 aa).

The Mitochondrial intermembrane segment spans residues 1-14; sequence MAHATQVGLQDATS. Residues 15–45 traverse the membrane as a helical segment; the sequence is PIMEELISFHDHALMIIFLISFLVLYALFLT. Topologically, residues 46–59 are mitochondrial matrix; sequence LTTKLTNTNITDAQ. A helical transmembrane segment spans residues 60 to 87; sequence EMETVWTILPAIILVLIALPSLRILYLT. The Mitochondrial intermembrane segment spans residues 88 to 227; the sequence is DEINDPSFTI…IFEMGPVFTL (140 aa). Cu cation contacts are provided by H161, C196, E198, C200, H204, and M207. E198 serves as a coordination point for Mg(2+).

It belongs to the cytochrome c oxidase subunit 2 family. In terms of assembly, component of the cytochrome c oxidase (complex IV, CIV), a multisubunit enzyme composed of 14 subunits. The complex is composed of a catalytic core of 3 subunits MT-CO1, MT-CO2 and MT-CO3, encoded in the mitochondrial DNA, and 11 supernumerary subunits COX4I, COX5A, COX5B, COX6A, COX6B, COX6C, COX7A, COX7B, COX7C, COX8 and NDUFA4, which are encoded in the nuclear genome. The complex exists as a monomer or a dimer and forms supercomplexes (SCs) in the inner mitochondrial membrane with NADH-ubiquinone oxidoreductase (complex I, CI) and ubiquinol-cytochrome c oxidoreductase (cytochrome b-c1 complex, complex III, CIII), resulting in different assemblies (supercomplex SCI(1)III(2)IV(1) and megacomplex MCI(2)III(2)IV(2)). Found in a complex with TMEM177, COA6, COX18, COX20, SCO1 and SCO2. Interacts with TMEM177 in a COX20-dependent manner. Interacts with COX20. Interacts with COX16. Cu cation serves as cofactor.

Its subcellular location is the mitochondrion inner membrane. It carries out the reaction 4 Fe(II)-[cytochrome c] + O2 + 8 H(+)(in) = 4 Fe(III)-[cytochrome c] + 2 H2O + 4 H(+)(out). Component of the cytochrome c oxidase, the last enzyme in the mitochondrial electron transport chain which drives oxidative phosphorylation. The respiratory chain contains 3 multisubunit complexes succinate dehydrogenase (complex II, CII), ubiquinol-cytochrome c oxidoreductase (cytochrome b-c1 complex, complex III, CIII) and cytochrome c oxidase (complex IV, CIV), that cooperate to transfer electrons derived from NADH and succinate to molecular oxygen, creating an electrochemical gradient over the inner membrane that drives transmembrane transport and the ATP synthase. Cytochrome c oxidase is the component of the respiratory chain that catalyzes the reduction of oxygen to water. Electrons originating from reduced cytochrome c in the intermembrane space (IMS) are transferred via the dinuclear copper A center (CU(A)) of subunit 2 and heme A of subunit 1 to the active site in subunit 1, a binuclear center (BNC) formed by heme A3 and copper B (CU(B)). The BNC reduces molecular oxygen to 2 water molecules using 4 electrons from cytochrome c in the IMS and 4 protons from the mitochondrial matrix. The chain is Cytochrome c oxidase subunit 2 (MT-CO2) from Hylobates lar (Lar gibbon).